Reading from the N-terminus, the 573-residue chain is Glutamate--tRNA ligase (573 aa).

Positions 106–116 (PNPDGAFHLGN) match the 'HIGH' region motif.

The protein belongs to the class-I aminoacyl-tRNA synthetase family. Glutamate--tRNA ligase type 2 subfamily.

It localises to the cytoplasm. The enzyme catalyses tRNA(Glu) + L-glutamate + ATP = L-glutamyl-tRNA(Glu) + AMP + diphosphate. In terms of biological role, catalyzes the attachment of glutamate to tRNA(Glu) in a two-step reaction: glutamate is first activated by ATP to form Glu-AMP and then transferred to the acceptor end of tRNA(Glu). This is Glutamate--tRNA ligase from Thermococcus onnurineus (strain NA1).